A 765-amino-acid chain; its full sequence is BRCA1-associated RING domain protein 1 (765 aa).

The interval 20-113 is required for BRCA1 binding; the sequence is MEPATDGLWA…KLQNLLHDNK (94 aa). An RING-type zinc finger spans residues 44–81; it reads CSRCANILKEPVCLGGCEHIFCSGCISDCVGSGCPVCY. Lys152 is covalently cross-linked (Glycyl lysine isopeptide (Lys-Gly) (interchain with G-Cter in SUMO2)). Disordered regions lie at residues 183–229, 299–328, and 369–410; these read AVPK…EELK, KDLR…GSNI, and NASD…MPAR. Over residues 195–204 the composition is skewed to basic residues; it reads SAKKHPKKSV. Residues 207–229 show a composition bias toward basic and acidic residues; the sequence is INREENLRPETKDSRFDSKEELK. Positions 316-328 are enriched in polar residues; that stretch reads PTTSTSDSCGSNI. A Phosphoserine modification is found at Ser378. Residue Thr381 is modified to Phosphothreonine. Positions 391–403 are enriched in polar residues; that stretch reads HRQMMSSPSTVKL. A Glycyl lysine isopeptide (Lys-Gly) (interchain with G-Cter in SUMO2) cross-link involves residue Lys411. 3 ANK repeats span residues 415 to 447, 448 to 480, and 481 to 513; these read RGET…VKDH, AGWT…TPGY, and QNDS…AVNI. One copy of the ANK 4; degenerate repeat lies at 514–534; it reads FGVRPVDYTDNENIRSLLLLP. Residues 542–546 are flexible linker; the sequence is TSQCS. 2 BRCT domains span residues 549-641 and 655-765; these read NTGQ…KYEV and LLPK…PLDS.

Homo- and heterodimer. Heterodimer (RING-type zinc finger) with BRCA1. Heterodimer (via ANK repeats and BRCT domains) with CSTF1/CSTF-50. Component of the BRCA1-A complex, at least composed of the BRCA1, BARD1, UIMC1/RAP80, ABRAXAS1, BRCC3/BRCC36, BABAM2 and BABAM1/NBA1. Interacts with UBXN1. In terms of processing, processed during apoptosis. The homodimer is more susceptible to proteolytic cleavage than the BARD1/BRCA1 heterodimer.

The protein resides in the nucleus. Its subcellular location is the cytoplasm. It carries out the reaction S-ubiquitinyl-[E2 ubiquitin-conjugating enzyme]-L-cysteine + [acceptor protein]-L-lysine = [E2 ubiquitin-conjugating enzyme]-L-cysteine + N(6)-ubiquitinyl-[acceptor protein]-L-lysine.. Its pathway is protein modification; protein ubiquitination. Functionally, E3 ubiquitin-protein ligase. The BRCA1-BARD1 heterodimer specifically mediates the formation of 'Lys-6'-linked polyubiquitin chains and coordinates a diverse range of cellular pathways such as DNA damage repair, ubiquitination and transcriptional regulation to maintain genomic stability. Plays a central role in the control of the cell cycle in response to DNA damage. Acts by mediating ubiquitin E3 ligase activity that is required for its tumor suppressor function. Also forms a heterodimer with CSTF1/CSTF-50 to modulate mRNA processing and RNAP II stability by inhibiting pre-mRNA 3' cleavage. The protein is BRCA1-associated RING domain protein 1 (Bard1) of Mus musculus (Mouse).